The following is a 140-amino-acid chain: Phosphatidylinositol N-acetylglucosaminyltransferase subunit GPI19 (140 aa).

Residues 1–12 (MYTKEYYWFSQY) are Cytoplasmic-facing. A helical transmembrane segment spans residues 13–33 (MIITSTLVLTIIWSILPSSLG). The Lumenal portion of the chain corresponds to 34 to 52 (EAAPKQFINTLLDIFPQRR). Residues 53 to 73 (WIITLESIMLMGMLCTYIGLL) traverse the membrane as a helical segment. Topologically, residues 74–140 (MYNEDTLTPP…YLYDNDHTST (67 aa)) are cytoplasmic.

The protein belongs to the GPI19 family. As to quaternary structure, component of the phosphatidylinositol N-acetylglucosaminyltransferase (GPI-GlcNAc transferase) complex composed of at least GPI1, GPI2, GPI3, GPI15, GPI19 and ERI1. Interacts with GPI2.

It localises to the endoplasmic reticulum membrane. It carries out the reaction a 1,2-diacyl-sn-glycero-3-phospho-(1D-myo-inositol) + UDP-N-acetyl-alpha-D-glucosamine = a 6-(N-acetyl-alpha-D-glucosaminyl)-1-(1,2-diacyl-sn-glycero-3-phospho)-1D-myo-inositol + UDP + H(+). The protein operates within glycolipid biosynthesis; glycosylphosphatidylinositol-anchor biosynthesis. Its function is as follows. Part of the complex catalyzing the transfer of N-acetylglucosamine from UDP-N-acetylglucosamine to phosphatidylinositol, the first step of GPI biosynthesis. Involved in cell wall biosynthesis. The polypeptide is Phosphatidylinositol N-acetylglucosaminyltransferase subunit GPI19 (GPI19) (Saccharomyces cerevisiae (strain ATCC 204508 / S288c) (Baker's yeast)).